Reading from the N-terminus, the 137-residue chain is MEAVLTKLDQEEKRALQDFHRCAWEETKNIINDFLEIPEERCTYKFNPYTKKMELLFTPEFHTAWQEVPECREFILNFLRLISGHRVVLKGPIIVFTKEVKNLGIPSTINVDFQANIENMDDLQKGNLIGKMNIKES.

The protein belongs to the asfivirus A137R family. As to quaternary structure, interacts with host TBK1.

It localises to the virion. The protein localises to the host cytoplasm. Its function is as follows. Plays a role in the inhibition of the host innate immune response. Mechanistically, promotes the autophagy-mediated lysosomal degradation of host TBK1 and affects IRF3 nuclear translocation to block type I IFN production. The polypeptide is Structural protein A137R (African swine fever virus (isolate Warthog/Namibia/Wart80/1980) (ASFV)).